A 374-amino-acid chain; its full sequence is Queuine tRNA-ribosyltransferase (374 aa).

Asp90 acts as the Proton acceptor in catalysis. Residues 90 to 94 (DSGGF), Asp144, Gln193, and Gly220 contribute to the substrate site. The interval 251–257 (GVGTPED) is RNA binding. Catalysis depends on Asp270, which acts as the Nucleophile. An RNA binding; important for wobble base 34 recognition region spans residues 275 to 279 (TRNAR). Zn(2+)-binding residues include Cys308, Cys310, Cys313, and His339.

This sequence belongs to the queuine tRNA-ribosyltransferase family. Homodimer. Within each dimer, one monomer is responsible for RNA recognition and catalysis, while the other monomer binds to the replacement base PreQ1. It depends on Zn(2+) as a cofactor.

The enzyme catalyses 7-aminomethyl-7-carbaguanine + guanosine(34) in tRNA = 7-aminomethyl-7-carbaguanosine(34) in tRNA + guanine. It functions in the pathway tRNA modification; tRNA-queuosine biosynthesis. Catalyzes the base-exchange of a guanine (G) residue with the queuine precursor 7-aminomethyl-7-deazaguanine (PreQ1) at position 34 (anticodon wobble position) in tRNAs with GU(N) anticodons (tRNA-Asp, -Asn, -His and -Tyr). Catalysis occurs through a double-displacement mechanism. The nucleophile active site attacks the C1' of nucleotide 34 to detach the guanine base from the RNA, forming a covalent enzyme-RNA intermediate. The proton acceptor active site deprotonates the incoming PreQ1, allowing a nucleophilic attack on the C1' of the ribose to form the product. After dissociation, two additional enzymatic reactions on the tRNA convert PreQ1 to queuine (Q), resulting in the hypermodified nucleoside queuosine (7-(((4,5-cis-dihydroxy-2-cyclopenten-1-yl)amino)methyl)-7-deazaguanosine). This chain is Queuine tRNA-ribosyltransferase, found in Campylobacter fetus subsp. fetus (strain 82-40).